The following is a 100-amino-acid chain: Ferredoxin (100 aa).

Residues 1-8 (MLSQVCRF) constitute a propeptide that is removed on maturation. Residues 9–100 (GTITAVKGGV…GENDGAVFEL (92 aa)) enclose the 2Fe-2S ferredoxin-type domain. Residues cysteine 46, cysteine 52, cysteine 55, and cysteine 85 each coordinate [2Fe-2S] cluster.

It depends on [2Fe-2S] cluster as a cofactor.

It is found in the hydrogenosome. In terms of biological role, ferredoxins are iron-sulfur proteins that transfer electrons in a wide variety of metabolic reactions. It links pyruvate:ferredoxin oxidoreductase to hydrogenase. This is Ferredoxin from Trichomonas vaginalis.